Reading from the N-terminus, the 72-residue chain is Hydrophobic protein OSR8 (72 aa).

Transmembrane regions (helical) follow at residues 9–29 (FLEILLAIILPPLGVFLRFGC) and 39–59 (LLTILGYVPGIIYAVYVLVAL).

It belongs to the UPF0057 (PMP3) family.

The protein resides in the membrane. The polypeptide is Hydrophobic protein OSR8 (OSR8) (Oryza sativa subsp. japonica (Rice)).